The sequence spans 333 residues: Fructose-1,6-bisphosphatase class 1 (333 aa).

The Mg(2+) site is built by glutamate 92, aspartate 113, leucine 115, and aspartate 116. Substrate contacts are provided by residues 116-119 (DGSS), asparagine 209, tyrosine 242, and lysine 272. Residue glutamate 278 participates in Mg(2+) binding.

It belongs to the FBPase class 1 family. In terms of assembly, homotetramer. Mg(2+) serves as cofactor.

It is found in the cytoplasm. It catalyses the reaction beta-D-fructose 1,6-bisphosphate + H2O = beta-D-fructose 6-phosphate + phosphate. Its pathway is carbohydrate biosynthesis; Calvin cycle. This Chlorobium luteolum (strain DSM 273 / BCRC 81028 / 2530) (Pelodictyon luteolum) protein is Fructose-1,6-bisphosphatase class 1.